Consider the following 291-residue polypeptide: Nucleotide-binding protein Athe_0320 (291 aa).

9-16 (GMSGAGKS) provides a ligand contact to ATP. 60–63 (DIRG) serves as a coordination point for GTP.

It belongs to the RapZ-like family.

In terms of biological role, displays ATPase and GTPase activities. The chain is Nucleotide-binding protein Athe_0320 from Caldicellulosiruptor bescii (strain ATCC BAA-1888 / DSM 6725 / KCTC 15123 / Z-1320) (Anaerocellum thermophilum).